We begin with the raw amino-acid sequence, 275 residues long: Putative phosphoenolpyruvate synthase regulatory protein (275 aa).

153-160 (GVSRSGKT) is an ADP binding site.

This sequence belongs to the pyruvate, phosphate/water dikinase regulatory protein family. PSRP subfamily.

It catalyses the reaction [pyruvate, water dikinase] + ADP = [pyruvate, water dikinase]-phosphate + AMP + H(+). The enzyme catalyses [pyruvate, water dikinase]-phosphate + phosphate + H(+) = [pyruvate, water dikinase] + diphosphate. Bifunctional serine/threonine kinase and phosphorylase involved in the regulation of the phosphoenolpyruvate synthase (PEPS) by catalyzing its phosphorylation/dephosphorylation. This Nitrosomonas eutropha (strain DSM 101675 / C91 / Nm57) protein is Putative phosphoenolpyruvate synthase regulatory protein.